A 473-amino-acid chain; its full sequence is Eukaryotic translation initiation factor 2 subunit gamma (473 aa).

The tr-type G domain maps to 40–250 (QATINIGTIG…AICNIAPPNY (211 aa)). Residues 49 to 56 (GHVAHGKS) form a G1 region. GTP is bound at residue 52-57 (AHGKSS). Residues 77–81 (NITIK) are G2. The tract at residues 135–138 (DCPG) is G3. GTP is bound by residues 193–196 (NKMD) and 228–230 (SAQ). Residues 193 to 196 (NKMD) form a G4 region. A G5 region spans residues 228–230 (SAQ). Positions 458 to 470 (GKVRSGGTLCEVV) are interacts with CDC123.

It belongs to the TRAFAC class translation factor GTPase superfamily. Classic translation factor GTPase family. EIF2G subfamily. In terms of assembly, eukaryotic translation initiation factor 2 eIF2 is a heterotrimeric complex composed of an alpha, a beta and a gamma subunit. The factors eIF-1, eIF-2, eIF-3, TIF5/eIF-5 and methionyl-tRNAi form a multifactor complex (MFC) that may bind to the 40S ribosome.

Its subcellular location is the cytoplasm. The protein localises to the cytosol. It carries out the reaction GTP + H2O = GDP + phosphate + H(+). In terms of biological role, as a subunit of eukaryotic initiation factor 2 eIF2, involved in the early steps of protein synthesis. In the presence of GTP, eIF-2 forms a ternary complex with initiator tRNA Met-tRNAi and then recruits the 40S ribosomal complex and initiation factors eIF-1, eIF-1A and eIF-3 to form the 43S pre-initiation complex (43S PIC), a step that determines the rate of protein translation. The 43S PIC binds to mRNA and scans downstream to the initiation codon, where it forms a 48S initiation complex by codon-anticodon base pairing. This leads to the displacement of eIF-1 to allow GTPase-activating protein (GAP) eIF-5-mediated hydrolysis of eIF2-bound GTP. Hydrolysis of GTP and release of Pi, which makes GTP hydrolysis irreversible, causes the release of the eIF-2-GDP binary complex from the 40S subunit, an event that is essential for the subsequent joining of the 60S ribosomal subunit to form an elongation-competent 80S ribosome. In order for eIF-2 to recycle and catalyze another round of initiation, the GDP bound to eIF-2 must be exchanged with GTP by way of a reaction catalyzed by GDP-GTP exchange factor (GEF) eIF-2B. The chain is Eukaryotic translation initiation factor 2 subunit gamma from Cryptococcus neoformans var. grubii serotype A (strain H99 / ATCC 208821 / CBS 10515 / FGSC 9487) (Filobasidiella neoformans var. grubii).